Consider the following 38-residue polypeptide: Defensin-like peptide 3 (38 aa).

Intrachain disulfides connect C6/C36 and C13/C29.

Produced by the crural gland and detected in venom from the spur located on each male hind leg.

It is found in the secreted. Functionally, does not show antimicrobial, myotoxic, hemolytic and cell-promoting activities. In Ornithorhynchus anatinus (Duckbill platypus), this protein is Defensin-like peptide 3.